The primary structure comprises 642 residues: Forkhead box protein K2 (642 aa).

The region spanning 30-91 is the FHA domain; the sequence is VTIGRNSSQG…NGVFVDGVFQ (62 aa). The disordered stretch occupies residues 201–221; sequence QSENDKDASGGDSPKDDSKPP. Basic and acidic residues predominate over residues 203 to 219; sequence ENDKDASGGDSPKDDSK. The segment at residues 219–314 is a DNA-binding region (fork-head); that stretch reads KPPYSYAQLI…EQAFRKRRPR (96 aa). A DNA-binding; major groove region spans residues 261-279; that stretch reads KGWQNSIRHNLSLNRYFIK. Positions 271, 272, 274, and 277 each coordinate Mg(2+). DNA-binding; minor groove regions lie at residues 289–293 and 309–314; these read KGSFW and RKRRPR. Disordered regions lie at residues 323 to 359 and 589 to 615; these read LGPL…REGS and ASAS…KTDE. Composition is skewed to polar residues over residues 327-353 and 589-605; these read SSRS…TPES and ASAS…QSEQ. Over residues 606-615 the composition is skewed to basic and acidic residues; sequence PDIKRGKTDE.

In neurula embryos, expressed strongly in the future floor plate and weakly in the neural crest progenitor cells. As development progresses, expression becomes stronger in neural crest cells. At stage 24, expressed in the eye, brain, branchial arches and in the presomitic mesoderm in the posterior embryo. At stage 29, additionally expressed in the pronephric tubules. At stage 35, expressed in the migrating lateral muscle precursors of the abdomen. Additionally, the developing proctodeum and head structures including the branchial arches, eyes and otic vesicles continue to show expression. Expression also persists in the nephros.

It localises to the nucleus. The protein resides in the cytoplasm. Functionally, transcriptional regulator involved in different processes such as glucose metabolism, aerobic glycolysis and autophagy. Recognizes and binds the forkhead DNA sequence motif (5'-GTAAACA-3') and can both act as a transcription activator or repressor, depending on the context. Acts as a key regulator of metabolic reprogramming towards aerobic glycolysis, a process in which glucose is converted to lactate in the presence of oxygen. Acts as a negative regulator of autophagy in skeletal muscle: in response to starvation, enters the nucleus, binds the promoters of autophagy genes and represses their expression, preventing proteolysis of skeletal muscle proteins. This chain is Forkhead box protein K2, found in Xenopus laevis (African clawed frog).